The following is a 341-amino-acid chain: Phenylalanine--tRNA ligase alpha subunit (341 aa).

Glutamate 254 provides a ligand contact to Mg(2+).

This sequence belongs to the class-II aminoacyl-tRNA synthetase family. Phe-tRNA synthetase alpha subunit type 1 subfamily. As to quaternary structure, tetramer of two alpha and two beta subunits. Mg(2+) is required as a cofactor.

The protein localises to the cytoplasm. The enzyme catalyses tRNA(Phe) + L-phenylalanine + ATP = L-phenylalanyl-tRNA(Phe) + AMP + diphosphate + H(+). The polypeptide is Phenylalanine--tRNA ligase alpha subunit (Chlorobium limicola (strain DSM 245 / NBRC 103803 / 6330)).